The primary structure comprises 485 residues: Glutamyl-tRNA(Gln) amidotransferase subunit A (485 aa).

Residues Lys-79 and Ser-154 each act as charge relay system in the active site. Ser-178 serves as the catalytic Acyl-ester intermediate.

It belongs to the amidase family. GatA subfamily. In terms of assembly, heterotrimer of A, B and C subunits.

The enzyme catalyses L-glutamyl-tRNA(Gln) + L-glutamine + ATP + H2O = L-glutaminyl-tRNA(Gln) + L-glutamate + ADP + phosphate + H(+). Its function is as follows. Allows the formation of correctly charged Gln-tRNA(Gln) through the transamidation of misacylated Glu-tRNA(Gln) in organisms which lack glutaminyl-tRNA synthetase. The reaction takes place in the presence of glutamine and ATP through an activated gamma-phospho-Glu-tRNA(Gln). The sequence is that of Glutamyl-tRNA(Gln) amidotransferase subunit A from Geobacillus thermodenitrificans (strain NG80-2).